A 172-amino-acid chain; its full sequence is Transcription factor E (172 aa).

The HTH TFE/IIEalpha-type domain maps to 8–90 (DDPVVQKYLH…LWTFQYENVP (83 aa)).

The protein belongs to the TFE family. Monomer. Interaction with RNA polymerase subunits RpoF and RpoE is necessary for Tfe stimulatory transcription activity. Able to interact with Tbp and RNA polymerase in the absence of DNA promoter. Interacts both with the preinitiation and elongation complexes.

Its function is as follows. Transcription factor that plays a role in the activation of archaeal genes transcribed by RNA polymerase. Facilitates transcription initiation by enhancing TATA-box recognition by TATA-box-binding protein (Tbp), and transcription factor B (Tfb) and RNA polymerase recruitment. Not absolutely required for transcription in vitro, but particularly important in cases where Tbp or Tfb function is not optimal. It dynamically alters the nucleic acid-binding properties of RNA polymerases by stabilizing the initiation complex and destabilizing elongation complexes. Seems to translocate with the RNA polymerase following initiation and acts by binding to the non template strand of the transcription bubble in elongation complexes. In Halobacterium salinarum (strain ATCC 700922 / JCM 11081 / NRC-1) (Halobacterium halobium), this protein is Transcription factor E.